Consider the following 294-residue polypeptide: Serine/threonine-protein kinase Aurora-1 (294 aa).

Residues 31 to 282 form the Protein kinase domain; that stretch reads FDIGKPLGRG…LHKLLEHPWI (252 aa). ATP contacts are provided by residues 37–45 and K60; that span reads LGRGKFGHV. D154 functions as the Proton acceptor in the catalytic mechanism. S176 is modified (phosphoserine). T185 carries the post-translational modification Phosphothreonine.

The protein belongs to the protein kinase superfamily. Ser/Thr protein kinase family. Aurora subfamily. Interacts with TPX2. Post-translationally, phosphorylation at Thr-185 may regulate activity and degradation of AUR1 in a cell cycle dependent manner. In terms of tissue distribution, abundant in roots, flowers and flower buds, low or absent in expanded leaves, stems and siliques.

The protein localises to the nucleus membrane. It is found in the cytoplasm. Its subcellular location is the cytoskeleton. The protein resides in the spindle. It localises to the spindle pole. The protein localises to the phragmoplast. It carries out the reaction L-seryl-[protein] + ATP = O-phospho-L-seryl-[protein] + ADP + H(+). It catalyses the reaction L-threonyl-[protein] + ATP = O-phospho-L-threonyl-[protein] + ADP + H(+). Its function is as follows. Phosphorylates specifically 'Ser-10' of histone H3 in vitro and colocalizes with phosphorylated histone H3 during mitosis. Associates with cytoskeletal structures that are necessary for cytokinesis and with the microtubule spindle. Also colocalizes with gamma-tubulin and function in microtubule organizing centers (MTOCs). In contrast with the mammalian B-type Aurora, AUR1 has no kinase activity toward 'Ser-28' of histone H3. This chain is Serine/threonine-protein kinase Aurora-1 (AUR1), found in Arabidopsis thaliana (Mouse-ear cress).